Here is a 936-residue protein sequence, read N- to C-terminus: Intimin (936 aa).

A signal peptide spans 1-41; the sequence is MIIHGFCTGTRHKHKLRKTFIMLGAGLGLFFSVNQNSFANG. Positions 63 to 112 constitute a LysM domain; that stretch reads LFYTLKTGESVAQLSKSQGISVPVIWSLNKHLYSSESEMMKASPGQQIIL. Big-1 domains lie at 557–650 and 657–748; these read ITNF…VIFV and ITEI…VEFF. The BIG2 domain maps to 780 to 831; the sequence is KLQATGGNGKYTWKSSNTKIASVDNSGVITLNEKGSATITVVSGDNQSATYT. Cysteine 857 and cysteine 934 are joined by a disulfide.

Belongs to the intimin/invasin family.

The protein localises to the cell outer membrane. An inverse autotransporter. This chain is Intimin (eae), found in Citrobacter freundii.